The primary structure comprises 492 residues: Pre-mRNA-splicing factor sap61 (492 aa).

Residues 243–267 (FYCEVCQKFFGKITVFEAHKKSKAH) form a C2H2-type zinc finger. Disordered stretches follow at residues 268-291 (NKAV…KQKG) and 337-365 (AAER…QDDE). Residues 276–286 (SSSPSTTSNTN) are compositionally biased toward low complexity. Positions 345-354 (QSTPSVSVEG) are enriched in polar residues. Over residues 355–365 (NQDEESDQDDE) the composition is skewed to acidic residues. Ser-360 is modified (phosphoserine). The segment at 397-428 (FPCEICGNYVYMGRKAFDKHFTEQRHIYGLKC) adopts a Matrin-type zinc-finger fold.

The protein belongs to the SF3A3 family. As to quaternary structure, belongs to the 40S cdc5-associated complex (or cwf complex), a spliceosome sub-complex reminiscent of a late-stage spliceosome composed of the U2, U5 and U6 snRNAs and at least brr2, cdc5, cwf2/prp3, cwf3/syf1, cwf4/syf3, cwf5/ecm2, spp42/cwf6, cwf7/spf27, cwf8, cwf9, cwf10, cwf11, cwf12, prp45/cwf13, cwf14, cwf15, cwf16, cwf17, cwf18, cwf19, cwf20, cwf21, cwf22, cwf23, cwf24, cwf25, cwf26, cyp7/cwf27, cwf28, cwf29/ist3, lea1, msl1, prp5/cwf1, prp10, prp12/sap130, prp17, prp22, sap61, sap62, sap114, sap145, slu7, smb1, smd1, smd3, smf1, smg1 and syf2.

It localises to the nucleus. Its subcellular location is the cytoplasm. Its function is as follows. Involved in mRNA splicing where it associates with cdc5 and the other cwf proteins as part of the spliceosome. The protein is Pre-mRNA-splicing factor sap61 (sap61) of Schizosaccharomyces pombe (strain 972 / ATCC 24843) (Fission yeast).